We begin with the raw amino-acid sequence, 373 residues long: Thyroid hormone receptor beta (373 aa).

The interval 1–18 (MPSSMSGYIPSYLDKDEL) is modulating. Residues Cys19, Cys22, Cys36, Cys39, Cys57, Cys63, Cys73, and Cys76 each coordinate Zn(2+). 2 consecutive NR C4-type zinc fingers follow at residues 19-39 (CVVC…CEGC) and 57-81 (CKYE…FKKC). Residues 19-93 (CVVCGDKATG…VGMATDLVLD (75 aa)) constitute a DNA-binding region (nuclear receptor). An NR LBD domain is found at 129 to 373 (EEWELIQVVT…PPLFLEVFED (245 aa)). Residues Arg194, Asn243, and His347 each contribute to the 3,3',5-triiodo-L-thyronine site. Residues Arg194, Asn243, and His347 each contribute to the L-thyroxine site.

The protein belongs to the nuclear hormone receptor family. NR1 subfamily.

The protein localises to the nucleus. Functionally, nuclear hormone receptor that can act as a repressor or activator of transcription. High affinity receptor for thyroid hormones, including triiodothyronine and thyroxine. The chain is Thyroid hormone receptor beta (thrb) from Aquarana catesbeiana (American bullfrog).